The primary structure comprises 468 residues: Na(+)/H(+) antiporter (468 aa).

A run of 8 helical transmembrane segments spans residues His12 to Phe32, Leu36 to Ala56, Asp81 to Phe96, Ile103 to Tyr123, Gly133 to Val153, Leu169 to Ile189, Trp204 to Gly224, and Gly258 to Phe278. A glycan (N-linked (GlcNAc...) asparagine) is linked at Asn287. Residues Val293 to Ile313 form a helical membrane-spanning segment. Asn319 carries an N-linked (GlcNAc...) asparagine glycan. 3 consecutive transmembrane segments (helical) span residues Trp320–Cys340, Ala362–Ala382, and Ile408–Ile428. Phosphoserine is present on residues Ser449 and Ser451.

It belongs to the fungal Na(+)/H(+) exchanger family.

It is found in the cell membrane. Its function is as follows. Sodium export from cell, takes up external protons in exchange for internal sodium ions. Involved in regulation of pH. The protein is Na(+)/H(+) antiporter of Schizosaccharomyces pombe (strain 972 / ATCC 24843) (Fission yeast).